The sequence spans 331 residues: Ketol-acid reductoisomerase (NADP(+)) (331 aa).

Residues 2–181 enclose the KARI N-terminal Rossmann domain; the sequence is LEKYYDKDAD…GATRAVVFET (180 aa). Residues 25–28, arginine 48, serine 52, and 82–85 each bind NADP(+); these read YGSQ and DEQQ. Histidine 107 is a catalytic residue. An NADP(+)-binding site is contributed by glycine 133. A KARI C-terminal knotted domain is found at 182-327; the sequence is SFREETETDL…KEIRATMPQF (146 aa). 4 residues coordinate Mg(2+): aspartate 190, glutamate 194, glutamate 226, and glutamate 230. Serine 251 is a substrate binding site.

It belongs to the ketol-acid reductoisomerase family. Mg(2+) serves as cofactor.

The enzyme catalyses (2R)-2,3-dihydroxy-3-methylbutanoate + NADP(+) = (2S)-2-acetolactate + NADPH + H(+). It catalyses the reaction (2R,3R)-2,3-dihydroxy-3-methylpentanoate + NADP(+) = (S)-2-ethyl-2-hydroxy-3-oxobutanoate + NADPH + H(+). It functions in the pathway amino-acid biosynthesis; L-isoleucine biosynthesis; L-isoleucine from 2-oxobutanoate: step 2/4. It participates in amino-acid biosynthesis; L-valine biosynthesis; L-valine from pyruvate: step 2/4. Functionally, involved in the biosynthesis of branched-chain amino acids (BCAA). Catalyzes an alkyl-migration followed by a ketol-acid reduction of (S)-2-acetolactate (S2AL) to yield (R)-2,3-dihydroxy-isovalerate. In the isomerase reaction, S2AL is rearranged via a Mg-dependent methyl migration to produce 3-hydroxy-3-methyl-2-ketobutyrate (HMKB). In the reductase reaction, this 2-ketoacid undergoes a metal-dependent reduction by NADPH to yield (R)-2,3-dihydroxy-isovalerate. In Methanospirillum hungatei JF-1 (strain ATCC 27890 / DSM 864 / NBRC 100397 / JF-1), this protein is Ketol-acid reductoisomerase (NADP(+)).